The chain runs to 210 residues: Large ribosomal subunit protein uL4 (210 aa).

The tract at residues 41–79 is disordered; that stretch reads MANARQGTASTKTRAEVRGGGRKPWRQKGTGRARAGSNR. The span at 43–52 shows a compositional bias: polar residues; it reads NARQGTASTK. Over residues 60–71 the composition is skewed to basic residues; it reads GGRKPWRQKGTG.

This sequence belongs to the universal ribosomal protein uL4 family. As to quaternary structure, part of the 50S ribosomal subunit.

Functionally, one of the primary rRNA binding proteins, this protein initially binds near the 5'-end of the 23S rRNA. It is important during the early stages of 50S assembly. It makes multiple contacts with different domains of the 23S rRNA in the assembled 50S subunit and ribosome. Forms part of the polypeptide exit tunnel. The polypeptide is Large ribosomal subunit protein uL4 (Cyanothece sp. (strain PCC 7425 / ATCC 29141)).